Here is a 597-residue protein sequence, read N- to C-terminus: Formate--tetrahydrofolate ligase (597 aa).

84–91 (TPLGEGKS) contacts ATP.

This sequence belongs to the formate--tetrahydrofolate ligase family.

It carries out the reaction (6S)-5,6,7,8-tetrahydrofolate + formate + ATP = (6R)-10-formyltetrahydrofolate + ADP + phosphate. The protein operates within one-carbon metabolism; tetrahydrofolate interconversion. The polypeptide is Formate--tetrahydrofolate ligase (Dehalococcoides mccartyi (strain ATCC BAA-2266 / KCTC 15142 / 195) (Dehalococcoides ethenogenes (strain 195))).